A 171-amino-acid chain; its full sequence is uncharacterized protein (171 aa).

Residues 21–43 traverse the membrane as a helical segment; it reads GVAASLLILLAVYTIFQSTVVIA.

The protein localises to the membrane. This is an uncharacterized protein from Archaeoglobus fulgidus (strain ATCC 49558 / DSM 4304 / JCM 9628 / NBRC 100126 / VC-16).